The following is a 103-amino-acid chain: Protein FMC1 homolog (103 aa).

It belongs to the FMC1 family.

This chain is Protein FMC1 homolog, found in Nematostella vectensis (Starlet sea anemone).